The following is a 94-amino-acid chain: Evasin P1104 (94 aa).

The first 28 residues, 1–28 (MASNLFTIFQLAGFVAIVFIVNLHSVSA), serve as a signal peptide directing secretion. Intrachain disulfides connect cysteine 48–cysteine 66, cysteine 52–cysteine 68, and cysteine 62–cysteine 79. Asparagine 51 carries N-linked (GlcNAc...) asparagine glycosylation.

It localises to the secreted. Functionally, salivary chemokine-binding protein which binds to host chemokines CXCL1, CXCL2, CXCL3, CXCL5, CXCL6, CXCL12 and CXCL13. The polypeptide is Evasin P1104 (Ixodes ricinus (Common tick)).